The following is a 284-amino-acid chain: 2-dehydro-3-deoxyphosphooctonate aldolase (284 aa).

It belongs to the KdsA family.

The protein localises to the cytoplasm. The catalysed reaction is D-arabinose 5-phosphate + phosphoenolpyruvate + H2O = 3-deoxy-alpha-D-manno-2-octulosonate-8-phosphate + phosphate. Its pathway is carbohydrate biosynthesis; 3-deoxy-D-manno-octulosonate biosynthesis; 3-deoxy-D-manno-octulosonate from D-ribulose 5-phosphate: step 2/3. It functions in the pathway bacterial outer membrane biogenesis; lipopolysaccharide biosynthesis. This is 2-dehydro-3-deoxyphosphooctonate aldolase from Bordetella petrii (strain ATCC BAA-461 / DSM 12804 / CCUG 43448).